A 489-amino-acid polypeptide reads, in one-letter code: Ribonuclease G (489 aa).

One can recognise an S1 motif domain in the interval 39 to 128 (GNIYKGRVSR…LTTDITLPSR (90 aa)). Mg(2+) is bound by residues D304 and D347.

The protein belongs to the RNase E/G family. RNase G subfamily. In terms of assembly, homodimer, in equilibrium with possible higher multimers. Requires Mg(2+) as cofactor.

Its subcellular location is the cytoplasm. Functionally, an endonuclease that acts in the processing of the 5'-end of 16S rRNA and 23S rRNA. It prefers 5'-monophosphorylated substrates and cleaves single-stranded sites rich in A and U residues; contributes to tRNA processing and mRNA turnover. This is Ribonuclease G (rng) from Escherichia coli O157:H7.